The sequence spans 567 residues: NAC domain-containing protein 78 (567 aa).

The region spanning 9 to 159 (LAPGFRFHPT…AYVLCRIFQK (151 aa)) is the NAC domain. Residues 108-165 (VGMKKTLVYHKGRAPRGERTNWVMHEYRLSDEDLKKAGVPQEAYVLCRIFQKSGTGPK) mediate DNA binding. The tract at residues 393-436 (NQEALDQKPAPKELEKEVAGGKEAVEEKESGEGSSSKQDTDFKD) is disordered. Over residues 397-423 (LDQKPAPKELEKEVAGGKEAVEEKESG) the composition is skewed to basic and acidic residues. Residues 544–564 (LVFMCLWVLLLSVSFKIVTMV) form a helical membrane-spanning segment.

In terms of tissue distribution, expressed in root meristem. Expressed in roots, rosette leaves, cauline leaves, shoot apex, stems and flowers.

It localises to the membrane. Its subcellular location is the nucleus. Functionally, transcriptional activator activated by proteolytic cleavage through regulated intramembrane proteolysis (RIP). Transcripition activator associated with the induction of genes related to flavonoid biosynthesis and required for the accumulation of anthocyanins in response to high light stress. Plays a role in the regulation of 20S and 26S proteasomes in response to high light stress. This is NAC domain-containing protein 78 (NAC078) from Arabidopsis thaliana (Mouse-ear cress).